A 496-amino-acid polypeptide reads, in one-letter code: DNA-dependent metalloprotease SPRTN (496 aa).

Met1 is modified (N-acetylmethionine). Positions 45–212 (LQALFLQFND…KTCGGTYIKI (168 aa)) constitute a SprT-like domain. His111 is a Zn(2+) binding site. Residue Glu112 is part of the active site. Residues His115 and His130 each contribute to the Zn(2+) site. At Lys230 the chain carries N6-acetyllysine. Residues 253–261 (FSGKGYVLG) carry the SHP-box motif. Ser268 is modified (phosphoserine). Lys303 is covalently cross-linked (Glycyl lysine isopeptide (Lys-Gly) (interchain with G-Cter in SUMO2)). The PIP-box signature appears at 326-333 (QSVLSSYF). Lys342 is covalently cross-linked (Glycyl lysine isopeptide (Lys-Gly) (interchain with G-Cter in SUMO2); alternate). Residue Lys342 forms a Glycyl lysine isopeptide (Lys-Gly) (interchain with G-Cter in ubiquitin); alternate linkage. The tract at residues 346 to 459 (NVNGSPVKSG…STPRSSGGQR (114 aa)) is disordered. Residue Lys361 forms a Glycyl lysine isopeptide (Lys-Gly) (interchain with G-Cter in SUMO2) linkage. Residues 382–403 (SSKVTAPASATVTSAAGTSAAI) are compositionally biased toward low complexity. Position 383 is a phosphoserine (Ser383). The Nuclear localization signal motif lies at 412–423 (DQFLNKRPRLED). Composition is skewed to polar residues over residues 426-437 (ALNNIKEQTQSG) and 445-457 (RPTA…SSGG). A Glycyl lysine isopeptide (Lys-Gly) (interchain with G-Cter in SUMO2) cross-link involves residue Lys431. A UBZ4-type zinc finger spans residues 461 to 488 (LVNCPVCQGVVLESQINEHLDRCLEGSK). Zn(2+) contacts are provided by Cys464, Cys467, His479, and Cys483.

Belongs to the Spartan family. In terms of assembly, homodimer. Interacts (VIA PIP-box) with PCNA (when ubiquitinated). Interacts (via its SHP-box) with VCP/p97. Interacts with RAD18. Interacts with KCTD13 and POLD3. The cofactor is Zn(2+). Autocatalytically cleaved in response to double-stranded DNA-binding: autocatalytic cleavage takes place in trans and leads to inactivation. In terms of processing, monoubiquitinated; monoubiquitination promotes exclusion from chromatin. Deubiquitinated by VCPIP1: deubiquitination is required for subsequent acetylation and recruitment to chromatin and DNA damage sites. Post-translationally, acetylated following deubiquitination by VCPIP1, leading to recruitment to chromatin and DNA damage sites. Phosphorylation by CHEK1 promotes recruitment to chromatin.

The protein resides in the nucleus. It is found in the chromosome. DNA-binding activates the protease activity: single-stranded DNA-binding specifically activates ability to cleave covalent DNA-protein cross-links (DPCs). In contrast, double-stranded DNA-binding specifically activates autocatalytic cleavage, and subsequent inactivation. In terms of biological role, DNA-dependent metalloendopeptidase that mediates the proteolytic cleavage of covalent DNA-protein cross-links (DPCs) during DNA synthesis, thereby playing a key role in maintaining genomic integrity. DPCs are highly toxic DNA lesions that interfere with essential chromatin transactions, such as replication and transcription, and which are induced by reactive agents, such as UV light or formaldehyde. Associates with the DNA replication machinery and specifically removes DPCs during DNA synthesis. Catalyzes proteolytic cleavage of the HMCES DNA-protein cross-link following unfolding by the BRIP1/FANCJ helicase. Acts as a pleiotropic protease for DNA-binding proteins cross-linked with DNA, such as TOP1, TOP2A, histones H3 and H4. Mediates degradation of DPCs that are not ubiquitinated, while it is not able to degrade ubiquitinated DPCs. SPRTN activation requires polymerase collision with DPCs followed by helicase bypass of DPCs. Involved in recruitment of VCP/p97 to sites of DNA damage. Also acts as an activator of CHEK1 during normal DNA replication by mediating proteolytic cleavage of CHEK1, thereby promoting CHEK1 removal from chromatin and subsequent activation. Does not activate CHEK1 in response to DNA damage. May also act as a 'reader' of ubiquitinated PCNA: recruited to sites of UV damage and interacts with ubiquitinated PCNA and RAD18, the E3 ubiquitin ligase that monoubiquitinates PCNA. Facilitates chromatin association of RAD18 and is required for efficient PCNA monoubiquitination, promoting a feed-forward loop to enhance PCNA ubiquitination and translesion DNA synthesis. The chain is DNA-dependent metalloprotease SPRTN from Rattus norvegicus (Rat).